A 202-amino-acid chain; its full sequence is MAPVCLFAPLLLLLLGGFPVAPGESIRETEVIDPQDLLEGRYFSGALPDDEDAGGLEQDSDFELSGSGDLDDTEEPRTFPEVISPLVPLDNHIPENAQPGIRVPSEPKELEENEVIPKRVPSDVGDDDVSNKVSMSSTSQGSNIFERTEVLAALIVGGVVGILFAVFLILLLVYRMKKKDEGSYDLGKKPIYKKAPTNEFYA.

A signal peptide spans 1–23; sequence MAPVCLFAPLLLLLLGGFPVAPG. Over 24–149 the chain is Extracellular; sequence ESIRETEVID…QGSNIFERTE (126 aa). Disordered regions lie at residues 42–76 and 89–138; these read YFSGALPDDEDAGGLEQDSDFELSGSGDLDDTEEP and LDNH…MSST. O-linked (Xyl...) (glycosaminoglycan) serine glycosylation occurs at Ser-44. Over residues 48–62 the composition is skewed to acidic residues; sequence PDDEDAGGLEQDSDF. O-linked (Xyl...) (glycosaminoglycan) serine glycosylation is found at Ser-65 and Ser-67. A compositionally biased stretch (basic and acidic residues) spans 105–121; the sequence is SEPKELEENEVIPKRVP. Residues 150 to 174 traverse the membrane as a helical segment; it reads VLAALIVGGVVGILFAVFLILLLVY. Topologically, residues 175-202 are cytoplasmic; that stretch reads RMKKKDEGSYDLGKKPIYKKAPTNEFYA.

This sequence belongs to the syndecan proteoglycan family. Homodimer. Interacts with CDCP1 and SDCBP. Interacts (via its cytoplasmic domain) with GIPC (via its PDZ domain). Interacts (via its cytoplasmic domain) with NUDT16L1. Interacts with DNM2; this interaction is markedly enhanced at focal ahesion site upon induction of focal adhesions and stress-fiber formation. Post-translationally, shedding is enhanced by a number of factors such as heparanase, thrombin or EGF. Also by stress and wound healing. PMA-mediated shedding is inhibited by TIMP3. In terms of processing, O-glycosylated; contains both chondroitin sulfate and heparan sulfate. Ser-44, Ser-65 and Ser-67 can all be modified by either chondroitin sulfate or heparan sulfate, and the protein exists in forms that contain only chondroitin sulfate, only heparan sulfate and both chondroitin sulfate and heparan sulfate.

Its subcellular location is the membrane. The protein resides in the secreted. In terms of biological role, cell surface proteoglycan which regulates exosome biogenesis in concert with SDCBP and PDCD6IP. This Rattus norvegicus (Rat) protein is Syndecan-4.